An 839-amino-acid chain; its full sequence is Transcription regulator protein BACH2 (839 aa).

Residues 37 to 103 (CDVTLIVERK…AYTAKLLLSR (67 aa)) form the BTB domain. Disordered stretches follow at residues 150 to 170 (QRPQEDHGNSAGEEEEEEETM) and 247 to 331 (HGTS…LDRS). The segment covering 161–170 (GEEEEEEETM) has biased composition (acidic residues). A compositionally biased stretch (polar residues) spans 247–263 (HGTSGFASTFSEDSPGN). A compositionally biased stretch (basic and acidic residues) spans 297 to 312 (TDIKDRPGDVEMDRKQ). Position 314 is a phosphoserine (S314). The span at 321–331 (TPTGAACLDRS) shows a compositional bias: low complexity. Residues K381 and K420 each participate in a glycyl lysine isopeptide (Lys-Gly) (interchain with G-Cter in SUMO2) cross-link. S520 is subject to Phosphoserine. Residues 582–609 (QSYGTNSSDESGSFSEADSESCPVQDRG) form a disordered region. Residues 583 to 597 (SYGTNSSDESGSFSE) show a composition bias toward polar residues. Residues 645–708 (FIHDIRRRSK…GELLDNFSCL (64 aa)) form the bZIP domain. Residues 650-666 (RRRSKNRIAAQRCRKRK) are basic motif. Residues 670–677 (IQNLECEI) form a leucine-zipper region. Residues 778-813 (PWVPSNTSENCTSGRRLEGSDPGTFSERGPPLEARS) are disordered. Positions 781–790 (PSNTSENCTS) are enriched in polar residues. Positions 819–839 (DFCQEMTEKCTTDEQPRKDYA) match the Nuclear export signal motif.

It belongs to the bZIP family. CNC subfamily. Homodimer; disulfide-linked. Heterodimer of BACH2 and Maf-related transcription factors. Post-translationally, the reversible disulfide bond may provide a mechanism to regulate the activity in oxidative stress responses. Phosphorylation at Ser-520 downstream of the PI-3K pathway promotes nuclear export. In terms of tissue distribution, detected in brain and spleen.

It is found in the cytoplasm. Its subcellular location is the nucleus. Transcriptional regulator that acts as a repressor or activator. Binds to Maf recognition elements (MARE). Plays an important role in coordinating transcription activation and repression by MAFK. Induces apoptosis in response to oxidative stress through repression of the antiapoptotic factor HMOX1. Positively regulates the nuclear import of actin. Is a key regulator of adaptive immunity, crucial for the maintenance of regulatory T-cell function and B-cell maturation. The chain is Transcription regulator protein BACH2 (Bach2) from Mus musculus (Mouse).